Here is a 321-residue protein sequence, read N- to C-terminus: MKKIMITGALGQIGTELVVKCREIYGTDNVLATDIREPEADSPVQNGPFEILDVTDRDRMFELVRDFEADSLMHMAALLSATAEKNPILAWDLNMGGLMNALEAARTYNLHFFTPSSIGAFGDSTPKVNTPQVTIQQPTTMYGVNKVAGELLCQYYFKRFGVDTRSVRFPGLISHVKEPGGGTTDYAVEIYFKAVREGHYTSFIDKGTYMDMMYMDDAIEAIIKLMEADDAKLETRNGYNLSAMSFDPEMVKEAIQEYYPNFTLDYDVDPIRQGIANSWPDSIDTSCSRGEWGFDPKYDLASMTKLMLEAIEQKDTVKNNN.

The protein belongs to the NAD(P)-dependent epimerase/dehydratase family.

This is an uncharacterized protein from Staphylococcus aureus (strain COL).